A 201-amino-acid polypeptide reads, in one-letter code: Peptide deformylase (201 aa).

Residues cysteine 121 and histidine 163 each contribute to the Fe cation site. The active site involves glutamate 164. A Fe cation-binding site is contributed by histidine 167.

This sequence belongs to the polypeptide deformylase family. It depends on Fe(2+) as a cofactor.

It carries out the reaction N-terminal N-formyl-L-methionyl-[peptide] + H2O = N-terminal L-methionyl-[peptide] + formate. In terms of biological role, removes the formyl group from the N-terminal Met of newly synthesized proteins. Requires at least a dipeptide for an efficient rate of reaction. N-terminal L-methionine is a prerequisite for activity but the enzyme has broad specificity at other positions. The polypeptide is Peptide deformylase (Parasynechococcus marenigrum (strain WH8102)).